Consider the following 169-residue polypeptide: Small ribosomal subunit protein uS5 (169 aa).

Positions 15-79 constitute an S5 DRBM domain; sequence LKDQVVAINR…ESAKKNLVKV (65 aa).

This sequence belongs to the universal ribosomal protein uS5 family. As to quaternary structure, part of the 30S ribosomal subunit. Contacts proteins S4 and S8.

Its function is as follows. With S4 and S12 plays an important role in translational accuracy. In terms of biological role, located at the back of the 30S subunit body where it stabilizes the conformation of the head with respect to the body. The polypeptide is Small ribosomal subunit protein uS5 (Koribacter versatilis (strain Ellin345)).